Here is a 1536-residue protein sequence, read N- to C-terminus: Glycogen debranching enzyme (1536 aa).

Residues Asp-535, His-538, and Asp-670 contribute to the active site.

The protein belongs to the glycogen debranching enzyme family. In terms of assembly, interacts with IGD1.

The protein resides in the mitochondrion. The protein localises to the cytoplasm. The enzyme catalyses Transfers a segment of a (1-&gt;4)-alpha-D-glucan to a new position in an acceptor, which may be glucose or a (1-&gt;4)-alpha-D-glucan.. It catalyses the reaction Hydrolysis of (1-&gt;6)-alpha-D-glucosidic branch linkages in glycogen phosphorylase limit dextrin.. Activity is inhibited by IGD1. In terms of biological role, multifunctional enzyme acting as 1,4-alpha-D-glucan:1,4-alpha-D-glucan 4-alpha-D-glycosyltransferase and amylo-1,6-glucosidase in glycogen degradation. The sequence is that of Glycogen debranching enzyme (GDB1) from Saccharomyces cerevisiae (strain ATCC 204508 / S288c) (Baker's yeast).